The chain runs to 329 residues: Cytosolic arginine sensor for mTORC1 subunit 1 (329 aa).

A Phosphoserine modification is found at serine 14. 2 consecutive ACT domains span residues 72–138 (AEAT…HTLA) and 260–321 (GELW…EVLQ). Residues 111-112 (SV), glycine 274, 280-281 (IV), and 300-304 (TFNFD) each bind L-arginine.

This sequence belongs to the GATS family. As to quaternary structure, forms homodimers and heterodimers with CASTOR2. Interacts with the GATOR2 complex which is composed of MIOS, SEC13, SEH1L, WDR24 and WDR59; the interaction is negatively regulated by arginine. Interacts with TM4SF5; the interaction is positively regulated by leucine and is negatively regulated by arginine. In terms of processing, phosphorylation at Ser-14 by AKT1, promoting the interaction between CASTOR1 and RNF167. Post-translationally, ubiquitinated by RNF167 via 'Lys-29'-polyubiquitination, leading to its degradation, releasing the GATOR2 complex. Ubiquitination by RNF167 is promoted by phosphorylation at Ser-14 by AKT1.

Its subcellular location is the cytoplasm. It is found in the cytosol. Its function is as follows. Functions as an intracellular arginine sensor within the amino acid-sensing branch of the TORC1 signaling pathway. As a homodimer or a heterodimer with CASTOR2, binds and inhibits the GATOR subcomplex GATOR2 and thereby mTORC1. Binding of arginine to CASTOR1 allosterically disrupts the interaction of CASTOR1-containing dimers with GATOR2 which can in turn activate mTORC1 and the TORC1 signaling pathway. The polypeptide is Cytosolic arginine sensor for mTORC1 subunit 1 (Bos taurus (Bovine)).